A 416-amino-acid polypeptide reads, in one-letter code: Transcription factor caaR (416 aa).

Positions 13 to 44 (CDRCYAQKLRCPRPSTNDDASCIRCLRQKVQC) form a DNA-binding region, zn(2)-C6 fungal-type. Disordered regions lie at residues 68-90 (ATAG…SDTA) and 130-150 (QPPP…GLDN). Residues 130–141 (QPPPLDTTPPPR) show a composition bias toward pro residues. 2 consecutive transmembrane segments (helical) span residues 249–269 (VIYH…ATLL) and 302–322 (SAPS…TYFL).

It localises to the membrane. The protein localises to the nucleus. Transcription factor that positively regulates the expression of the gene cluster that mediates the biosynthesis of the acyltetronic acid derivatives carlosic acid, agglomerin F and carlosic acid methyl ether. The chain is Transcription factor caaR from Aspergillus niger (strain ATCC MYA-4892 / CBS 513.88 / FGSC A1513).